The chain runs to 89 residues: Co-chaperonin GroES (89 aa).

It belongs to the GroES chaperonin family. In terms of assembly, heptamer of 7 subunits arranged in a ring. Interacts with the chaperonin GroEL.

The protein localises to the cytoplasm. Together with the chaperonin GroEL, plays an essential role in assisting protein folding. The GroEL-GroES system forms a nano-cage that allows encapsulation of the non-native substrate proteins and provides a physical environment optimized to promote and accelerate protein folding. GroES binds to the apical surface of the GroEL ring, thereby capping the opening of the GroEL channel. This Wolinella succinogenes (strain ATCC 29543 / DSM 1740 / CCUG 13145 / JCM 31913 / LMG 7466 / NCTC 11488 / FDC 602W) (Vibrio succinogenes) protein is Co-chaperonin GroES.